Consider the following 106-residue polypeptide: Iron-sulfur cluster assembly protein CyaY (106 aa).

It belongs to the frataxin family.

Functionally, involved in iron-sulfur (Fe-S) cluster assembly. May act as a regulator of Fe-S biogenesis. This Salmonella schwarzengrund (strain CVM19633) protein is Iron-sulfur cluster assembly protein CyaY.